The chain runs to 887 residues: Transportin-2 (887 aa).

HEAT repeat units follow at residues G9–K36, F41–Q79, F88–L121, L127–D164, N171–M201, F214–L241, H253–T280, V296–V386, H394–A422, P434–R461, L475–A508, L516–V549, E557–Q595, E603–G654, I665–F696, A704–G737, Q745–P780, Q788–N821, I830–V861, and E864–F884. Residues V31–D99 enclose the Importin N-terminal domain. The segment at T344–D363 is disordered. K852 bears the N6-acetyllysine mark.

It belongs to the importin beta family. Importin beta-2 subfamily.

The protein localises to the cytoplasm. The protein resides in the nucleus. In terms of biological role, probably functions in nuclear protein import as nuclear transport receptor. Serves as receptor for nuclear localization signals (NLS) in cargo substrates. Is thought to mediate docking of the importin/substrate complex to the nuclear pore complex (NPC) through binding to nucleoporin and the complex is subsequently translocated through the pore by an energy requiring, Ran-dependent mechanism. At the nucleoplasmic side of the NPC, Ran binds to the importin, the importin/substrate complex dissociates and importin is re-exported from the nucleus to the cytoplasm where GTP hydrolysis releases Ran. The directionality of nuclear import is thought to be conferred by an asymmetric distribution of the GTP- and GDP-bound forms of Ran between the cytoplasm and nucleus. The polypeptide is Transportin-2 (Tnpo2) (Mus musculus (Mouse)).